The sequence spans 1121 residues: Myelin transcription factor 1 (1121 aa).

Disordered stretches follow at residues 1–156 (MSLE…SKGS) and 200–376 (EAAE…MTRG). A CCHHC-type 1 zinc finger spans residues 21 to 64 (PETTAADLSCPTPGCTGSGHVRGKYSRHRSLQSCPLAKKRKLEG). The Zn(2+) site is built by C30, C35, H48, and C54. Over residues 41–50 (VRGKYSRHRS) the composition is skewed to basic residues. 2 stretches are compositionally biased toward basic and acidic residues: residues 62–71 (LEGAEAEHLV) and 123–132 (DEIHRPETAE). Low complexity predominate over residues 147-156 (GSATASSKGS). Positions 258 to 308 (EEEDEEEEEEEEEEEEDEEEEEEEEEEEEEEEEEEEEEEEEEEEEEEEEAA) are enriched in acidic residues. Over residues 346 to 358 (VRSDDDKDEDTHS) the composition is skewed to basic and acidic residues. 2 CCHHC-type zinc fingers span residues 433-476 (SRAE…PPEI) and 477-520 (LAMH…KLAK). Residues C442, C447, H460, C466, C486, C491, H504, and C510 each coordinate Zn(2+). Disordered stretches follow at residues 517–540 (KLAK…SNSD) and 668–774 (TLDL…EERK). The segment covering 526-540 (QPQTGDPSKSSSNSD) has biased composition (polar residues). Residues 705–723 (SSTSAPSSSMTSPQSSQAS) show a composition bias toward low complexity. Residues 724 to 733 (RQDEWDRPLD) show a composition bias toward basic and acidic residues. Residues 759–770 (EADDQEVSEENF) show a composition bias toward acidic residues. 4 CCHHC-type zinc fingers span residues 791–834 (KDIK…LRNL), 835–878 (MAAH…GVKV), 884–927 (DKED…QKEG), and 937–980 (KSLK…GKKG). The Zn(2+) site is built by C800, C805, H818, C824, C844, C849, H862, C868, C893, C898, H911, C917, C946, C951, H964, and C970.

This sequence belongs to the MYT1 family. Interacts with STEAP3. Mostly in developing nervous system. Expressed in neural progenitors and oligodendrocyte lineage cells. More highly expressed in oligodendrocyte progenitors than in differentiated oligodendrocytes.

The protein resides in the nucleus. Binds to the promoter region of genes encoding proteolipid proteins of the central nervous system. May play a role in the development of neurons and oligodendroglia in the CNS. May regulate a critical transition point in oligodendrocyte lineage development by modulating oligodendrocyte progenitor proliferation relative to terminal differentiation and up-regulation of myelin gene transcription. The chain is Myelin transcription factor 1 (MYT1) from Homo sapiens (Human).